The following is a 298-amino-acid chain: 1,2-dihydroxynaphthalene dioxygenase (298 aa).

VOC domains follow at residues 6-121 (ELGY…IFYG) and 146-267 (GIGH…FGWG). His-149 is a Fe cation binding site. Residues His-149, 196–197 (QH), His-212, and Tyr-253 contribute to the substrate site. His-212 is a binding site for Fe cation. Glu-263 is a Fe cation binding site.

It belongs to the extradiol ring-cleavage dioxygenase family. Homooctamer. Fe(2+) serves as cofactor.

It carries out the reaction naphthalene-1,2-diol + O2 = 2-hydroxychromene-2-carboxylate + H(+). Its pathway is aromatic compound metabolism; naphthalene degradation. In terms of biological role, involved in the naphthalene and naphthalenesulfonate catabolic pathway. Catalyzes the meta-cleavage of 1,2-dihydroxynaphthalene (1,2-DHN) to yield 2-hydroxychromene-2-carboxylic acid. Can also cleave 1,2,5-trihydroxynaphthalene (1,2,5-THN), 1,2,6-trihydroxynaphthalene (1,2,6-THN), 1,2,7-trihydroxynaphthalene (1,2,7-THN), 2,3-dihydroxybiphenyl, 3,4-dihydroxybiphenyl, catechol, 3-methylcatechol and 4-methylcatechol. This chain is 1,2-dihydroxynaphthalene dioxygenase (nsaC), found in Sphingobium xenophagum.